The chain runs to 541 residues: Chaperonin GroEL (541 aa).

ATP is bound by residues 29–32 (TLGP), 86–90 (DGTTT), glycine 413, 476–478 (NAA), and aspartate 492. The segment at 521–541 (KPEDNPAPAAPAANPGMGGMM) is disordered. Residues 526–535 (PAPAAPAANP) are compositionally biased toward low complexity.

This sequence belongs to the chaperonin (HSP60) family. In terms of assembly, forms a cylinder of 14 subunits composed of two heptameric rings stacked back-to-back. Interacts with the co-chaperonin GroES.

It localises to the cytoplasm. It carries out the reaction ATP + H2O + a folded polypeptide = ADP + phosphate + an unfolded polypeptide.. In terms of biological role, together with its co-chaperonin GroES, plays an essential role in assisting protein folding. The GroEL-GroES system forms a nano-cage that allows encapsulation of the non-native substrate proteins and provides a physical environment optimized to promote and accelerate protein folding. The protein is Chaperonin GroEL of Levilactobacillus brevis (strain ATCC 367 / BCRC 12310 / CIP 105137 / JCM 1170 / LMG 11437 / NCIMB 947 / NCTC 947) (Lactobacillus brevis).